The sequence spans 589 residues: Probable 9-cis-epoxycarotenoid dioxygenase NCED5, chloroplastic (589 aa).

The N-terminal 45 residues, 1–45 (MACSYILTPNPTKLNLSFAPSDLDAPSPSSSVSFTNTKPRRRKLS), are a transit peptide targeting the chloroplast. The span at 21–34 (SDLDAPSPSSSVSF) shows a compositional bias: low complexity. The tract at residues 21–51 (SDLDAPSPSSSVSFTNTKPRRRKLSANSVSD) is disordered. Fe cation contacts are provided by histidine 287, histidine 336, histidine 401, and histidine 576.

This sequence belongs to the carotenoid oxygenase family. Interacts in vitro with VAR3. It depends on Fe(2+) as a cofactor. Detected only in seeds.

Its subcellular location is the plastid. It is found in the chloroplast thylakoid membrane. The catalysed reaction is a 9-cis-epoxycarotenoid + O2 = a 12'-apo-carotenal + 2-cis,4-trans-xanthoxin. The enzyme catalyses 9-cis-violaxanthin + O2 = (3S,5R,6S)-5,6-epoxy-3-hydroxy-5,6-dihydro-12'-apo-beta-caroten-12'-al + 2-cis,4-trans-xanthoxin. It catalyses the reaction 9'-cis-neoxanthin + O2 = (3S,5R,6R)-3,5-dihydroxy-6,7-didehydro-5,6-dihydro-12'-apo-beta-caroten-12'-al + 2-cis,4-trans-xanthoxin. In terms of biological role, has a 11,12(11',12') 9-cis epoxycarotenoid cleavage activity. Catalyzes the first step of abscisic-acid biosynthesis from carotenoids. This is Probable 9-cis-epoxycarotenoid dioxygenase NCED5, chloroplastic (NCED5) from Arabidopsis thaliana (Mouse-ear cress).